We begin with the raw amino-acid sequence, 864 residues long: Dynamin-1 (864 aa).

The Dynamin-type G domain maps to 28-294 (DLDLPQIAVV…LTNHIRDTLP (267 aa)). Positions 38-45 (GGQSAGKS) are G1 motif. Positions 41, 43, 44, 45, 46, 59, and 60 each coordinate GDP. The tract at residues 64-66 (VTR) is G2 motif. Tyr-80 is subject to Phosphotyrosine. 3'-nitrotyrosine; alternate is present on Tyr-125. Tyr-125 carries the post-translational modification Phosphotyrosine; alternate. The segment at 136-139 (DLPG) is G3 motif. The tract at residues 205 to 208 (TKLD) is G4 motif. Residues Lys-206, Asp-208, Asp-211, Asn-236, Arg-237, and Gln-239 each coordinate GDP. Residues 235–238 (VNRS) form a G5 motif region. 2 positions are modified to phosphoserine: Ser-306 and Ser-347. Tyr-354 is modified (phosphotyrosine). A Phosphoserine modification is found at Ser-512. The region spanning 519–625 (LVIRKGWLTI…WKASFLRAGV (107 aa)) is the PH domain. The region spanning 659 to 750 (VETIRNLVDS…IIGDINTTTV (92 aa)) is the GED domain. The interval 767-864 (SVPAGRRSPT…PESPRPPFDL (98 aa)) is disordered. At Ser-774 the chain carries Phosphoserine; by CDK5. Position 778 is a phosphoserine (Ser-778). Arg-796 bears the Omega-N-methylarginine mark. Residue Ser-822 is modified to Phosphoserine. Residues 825–843 (PFGPPPQVPSRPNRAPPGV) are compositionally biased toward pro residues. 2 positions are modified to phosphoserine: Ser-851 and Ser-857.

The protein belongs to the TRAFAC class dynamin-like GTPase superfamily. Dynamin/Fzo/YdjA family. As to quaternary structure, homodimer; homodimerization is mediated by the dynamin-type G domain which promotes assembly-stimulated GTPase activity. Homo-tetramer formed from two dimers in the absence of lipid. Oligomerizes into a helical polymer that self-assembles around the vesicle membrane, when associated to the menbrane through lipid binding. Interacts (via C-terminal proline-rich domain (PRD)) with SNX9 (via SH3 domain); this interaction allows regulation of DNM1 self-assembly during late stages of endocytic vesicle formation and supports DNM1's early functions in accelerating clathrin-coated pits (CCPs) maturation in non neuronals cell. Interacts (via C-terminal proline-rich domain (PRD)) with MYO1E (via SH3 domain); this interaction regulates receptor-mediated endocytosis. Interacts with SNX33 (via SH3 domain); this interaction decreases DNM1-dependent endocytosis. Interacts with DIAPH1. Interacts with GRB2 (via SH3 domain); this interaction mediates disassembly of DNM1 polymers, therefore modulates self-assembly. Forms a complex with BIN1 (via SH3 domain) and SH3GL2 (via SH3 domain). Forms a complex with SH3GL2 (via SH3 domain) and AMPH (via SH3 domain). Forms a complex with SH3GL2 (via SH3 domain) and SYNJ1. Interacts with AMPH. Interacts (via C-terminal proline-rich domain (PRD)) with SYT1; this interaction facilitates vesicle fission during clathrin-mediated endocytosis (CME). Interacts (via C-terminal proline-rich domain (PRD)) with PLCG1 (via SH3 domain); this interaction stimulates the release of GDP from DNM1 and enhances DNM1-dependent endocytosis. Interacts with SNPH; this interaction inhibits the binding of DNM1 to AMPH and DNM1-receptor-mediated endocytosis. Interacts with CAV1. Interacts with SH3GLB1 (via SH3 domain). Interacts with PACSIN1 (via SH3 domain), PACSIN2 (via SH3 domain) and PACSIN3 (via SH3 domain). Interacts with UNC119; this interaction decreases DNM1's GTPase activity and affects DNM1's interaction with AMPH. Interacts (GTP-bound form) with DNAJC6; this interaction allows clathrin-coated vesicle (CCV) formation at the plasma membrane. Phosphorylation at Ser-774 by GSK3B/GSK3-beta leads to inactivation of receptor-mediated endocytosis in non-neuronal cells. Dephosphorylation at Ser-774, through the EGFR downstream signaling, leads to activation and regulates early stages of clathrin-mediated endocytosis (CME). Phosphorylated by CDK5 leading to synaptic vesicle endocytosis (SVE) activation. As to expression, brain-specific (peripheral sensory neurons).

It localises to the cytoplasmic vesicle. The protein localises to the clathrin-coated vesicle. Its subcellular location is the golgi apparatus. It is found in the cell membrane. The protein resides in the membrane. It localises to the clathrin-coated pit. The protein localises to the presynapse. Its subcellular location is the secretory vesicle. It is found in the chromaffin granule. It carries out the reaction GTP + H2O = GDP + phosphate + H(+). Catalyzes the hydrolysis of GTP and utilizes this energy to mediate vesicle scission and participates in many forms of endocytosis, such as clathrin-mediated endocytosis or synaptic vesicle endocytosis as well as rapid endocytosis (RE). Associates to the membrane, through lipid binding, and self-assembles into rings and stacks of interconnected rings through oligomerization to form a helical polymer around the vesicle membrane leading to constriction of invaginated coated pits around their necks. Self-assembly of the helical polymer induces membrane tubules narrowing until the polymer reaches a length sufficient to trigger GTP hydrolysis. Depending on the curvature imposed on the tubules, membrane detachment from the helical polymer upon GTP hydrolysis can cause spontaneous hemifission followed by complete fission. May play a role in regulating early stages of clathrin-mediated endocytosis in non-neuronal cells through its activation by dephosphorylation via the signaling downstream of EGFR. Controls vesicle size at a step before fission, during formation of membrane pits, at hippocampal synapses. Controls plastic adaptation of the synaptic vesicle recycling machinery to high levels of activity. Mediates rapid endocytosis (RE), a Ca(2+)-dependent and clathrin- and K(+)-independent process in chromaffin cells. Microtubule-associated force-producing protein involved in producing microtubule bundles and able to bind and hydrolyze GTP. Through its interaction with DNAJC6, acts during the early steps of clathrin-coated vesicle (CCV) formation. In Rattus norvegicus (Rat), this protein is Dynamin-1 (Dnm1).